The primary structure comprises 448 residues: UDP-N-acetylmuramoylalanine--D-glutamate ligase (448 aa).

116–122 (GSNAKST) is a binding site for ATP.

This sequence belongs to the MurCDEF family.

It localises to the cytoplasm. It catalyses the reaction UDP-N-acetyl-alpha-D-muramoyl-L-alanine + D-glutamate + ATP = UDP-N-acetyl-alpha-D-muramoyl-L-alanyl-D-glutamate + ADP + phosphate + H(+). It participates in cell wall biogenesis; peptidoglycan biosynthesis. Its function is as follows. Cell wall formation. Catalyzes the addition of glutamate to the nucleotide precursor UDP-N-acetylmuramoyl-L-alanine (UMA). The protein is UDP-N-acetylmuramoylalanine--D-glutamate ligase of Pseudomonas syringae pv. tomato (strain ATCC BAA-871 / DC3000).